Consider the following 448-residue polypeptide: Chromosomal replication initiator protein DnaA (448 aa).

Residues Met1–Lys73 form a domain I, interacts with DnaA modulators region. Positions Lys73–Thr109 are domain II. The interval Met110–Ser326 is domain III, AAA+ region. Residues Gly154, Gly156, Lys157, and Thr158 each contribute to the ATP site. The domain IV, binds dsDNA stretch occupies residues Ser327–Lys448.

Belongs to the DnaA family. Oligomerizes as a right-handed, spiral filament on DNA at oriC.

It localises to the cytoplasm. In terms of biological role, plays an essential role in the initiation and regulation of chromosomal replication. ATP-DnaA binds to the origin of replication (oriC) to initiate formation of the DNA replication initiation complex once per cell cycle. Binds the DnaA box (a 9 base pair repeat at the origin) and separates the double-stranded (ds)DNA. Forms a right-handed helical filament on oriC DNA; dsDNA binds to the exterior of the filament while single-stranded (ss)DNA is stabiized in the filament's interior. The ATP-DnaA-oriC complex binds and stabilizes one strand of the AT-rich DNA unwinding element (DUE), permitting loading of DNA polymerase. After initiation quickly degrades to an ADP-DnaA complex that is not apt for DNA replication. Binds acidic phospholipids. The chain is Chromosomal replication initiator protein DnaA from Clostridium botulinum (strain ATCC 19397 / Type A).